Reading from the N-terminus, the 120-residue chain is Holo-[acyl-carrier-protein] synthase (120 aa).

2 residues coordinate Mg(2+): D8 and E58.

It belongs to the P-Pant transferase superfamily. AcpS family. Mg(2+) serves as cofactor.

Its subcellular location is the cytoplasm. The catalysed reaction is apo-[ACP] + CoA = holo-[ACP] + adenosine 3',5'-bisphosphate + H(+). Functionally, transfers the 4'-phosphopantetheine moiety from coenzyme A to a Ser of acyl-carrier-protein. The chain is Holo-[acyl-carrier-protein] synthase from Streptococcus pneumoniae (strain Hungary19A-6).